We begin with the raw amino-acid sequence, 144 residues long: Large ribosomal subunit protein uL15 (144 aa).

The segment at 1–57 (MELNNLKPAEGSKHAKRRVGRGIGSGLGKTAGRGHKGQKSRSGGFHKVGFEGGQMPL) is disordered. Over residues 21-31 (RGIGSGLGKTA) the composition is skewed to gly residues.

Belongs to the universal ribosomal protein uL15 family. As to quaternary structure, part of the 50S ribosomal subunit.

In terms of biological role, binds to the 23S rRNA. This Paraburkholderia phytofirmans (strain DSM 17436 / LMG 22146 / PsJN) (Burkholderia phytofirmans) protein is Large ribosomal subunit protein uL15.